A 201-amino-acid polypeptide reads, in one-letter code: Dephospho-CoA kinase (201 aa).

The DPCK domain maps to 4 to 201 (SVGLTGNIAS…KYLREAKIKQ (198 aa)). 12 to 17 (ASGKST) is an ATP binding site.

The protein belongs to the CoaE family.

The protein resides in the cytoplasm. The catalysed reaction is 3'-dephospho-CoA + ATP = ADP + CoA + H(+). It participates in cofactor biosynthesis; coenzyme A biosynthesis; CoA from (R)-pantothenate: step 5/5. Functionally, catalyzes the phosphorylation of the 3'-hydroxyl group of dephosphocoenzyme A to form coenzyme A. This is Dephospho-CoA kinase from Legionella pneumophila (strain Paris).